We begin with the raw amino-acid sequence, 222 residues long: Glutathione S-transferase A5 (222 aa).

Residue Ala2 is modified to N-acetylalanine. The GST N-terminal domain maps to 3 to 83 (EKPKLHYSNA…YIASKYNLYG (81 aa)). Lys4 is subject to N6-succinyllysine. Glutathione contacts are provided by residues Tyr9, Arg45, 54–55 (QV), and 67–68 (QT). The GST C-terminal domain occupies 85–208 (DMKERALIDM…QPGSQRKPPM (124 aa)).

This sequence belongs to the GST superfamily. Alpha family. As to quaternary structure, homodimer. In terms of tissue distribution, expression not detected.

The protein resides in the cytoplasm. It carries out the reaction RX + glutathione = an S-substituted glutathione + a halide anion + H(+). This is Glutathione S-transferase A5 (GSTA5) from Homo sapiens (Human).